Reading from the N-terminus, the 160-residue chain is SsrA-binding protein (160 aa).

The protein belongs to the SmpB family.

It localises to the cytoplasm. In terms of biological role, required for rescue of stalled ribosomes mediated by trans-translation. Binds to transfer-messenger RNA (tmRNA), required for stable association of tmRNA with ribosomes. tmRNA and SmpB together mimic tRNA shape, replacing the anticodon stem-loop with SmpB. tmRNA is encoded by the ssrA gene; the 2 termini fold to resemble tRNA(Ala) and it encodes a 'tag peptide', a short internal open reading frame. During trans-translation Ala-aminoacylated tmRNA acts like a tRNA, entering the A-site of stalled ribosomes, displacing the stalled mRNA. The ribosome then switches to translate the ORF on the tmRNA; the nascent peptide is terminated with the 'tag peptide' encoded by the tmRNA and targeted for degradation. The ribosome is freed to recommence translation, which seems to be the essential function of trans-translation. This Mannheimia succiniciproducens (strain KCTC 0769BP / MBEL55E) protein is SsrA-binding protein.